Reading from the N-terminus, the 299-residue chain is Ophiobolin family sesterterpenoid biosynthesis cluster acetyltransferase (299 aa).

An N-terminal signal peptide occupies residues 1 to 20 (MYFFRALLSPVVLWPALVSG). 7 N-linked (GlcNAc...) asparagine glycosylation sites follow: Asn-28, Asn-58, Asn-77, Asn-126, Asn-177, Asn-212, and Asn-282.

The protein belongs to the bfoA family.

The protein operates within secondary metabolite biosynthesis; terpenoid biosynthesis. Acetyltransferase; part of the gene cluster that mediates the biosynthesis of an ophiobolin family sesterterpenoid. Functionally, sesterterpenoid synthase; part of the gene cluster that mediates the biosynthesis of an ophiobolin family sesterterpenoid. This is Ophiobolin family sesterterpenoid biosynthesis cluster acetyltransferase from Aspergillus terreus.